The chain runs to 263 residues: Small ribosomal subunit protein uS2 (263 aa).

Basic and acidic residues predominate over residues 223–249; the sequence is KALREQDGEALANEEKEITDEEKKEVL. The disordered stretch occupies residues 223–263; it reads KALREQDGEALANEEKEITDEEKKEVLDEAMSEEDFGEEQE. Acidic residues predominate over residues 250–263; that stretch reads DEAMSEEDFGEEQE.

This sequence belongs to the universal ribosomal protein uS2 family.

This is Small ribosomal subunit protein uS2 from Campylobacter jejuni subsp. jejuni serotype O:6 (strain 81116 / NCTC 11828).